Reading from the N-terminus, the 178-residue chain is Cell division protein SepF (178 aa).

Residues 21 to 46 show a composition bias toward basic and acidic residues; it reads YESEQSVATHHDEERPQAQEREERRA. The disordered stretch occupies residues 21–65; the sequence is YESEQSVATHHDEERPQAQEREERRAPAPVREVVREMPTVDAEEE.

It belongs to the SepF family. Homodimer. Interacts with FtsZ.

Its subcellular location is the cytoplasm. Functionally, cell division protein that is part of the divisome complex and is recruited early to the Z-ring. Probably stimulates Z-ring formation, perhaps through the cross-linking of FtsZ protofilaments. Its function overlaps with FtsA. The polypeptide is Cell division protein SepF (Paenarthrobacter aurescens (strain TC1)).